Consider the following 231-residue polypeptide: Phosphatidate cytidylyltransferase (231 aa).

6 consecutive transmembrane segments (helical) span residues 33–53, 67–87, 95–115, 133–153, 167–187, and 206–226; these read FVVA…LVAI, IMYL…LIFL, WLIM…MIGG, WSGL…ISFI, IYLF…DLFI, and HGGV…LFFI.

This sequence belongs to the CDS family.

The protein localises to the cell membrane. It catalyses the reaction a 1,2-diacyl-sn-glycero-3-phosphate + CTP + H(+) = a CDP-1,2-diacyl-sn-glycerol + diphosphate. It functions in the pathway phospholipid metabolism; CDP-diacylglycerol biosynthesis; CDP-diacylglycerol from sn-glycerol 3-phosphate: step 3/3. The chain is Phosphatidate cytidylyltransferase (cdsA) from Rickettsia bellii (strain RML369-C).